Here is a 796-residue protein sequence, read N- to C-terminus: Histone-lysine N-methyltransferase PRDM9 (796 aa).

The disordered stretch occupies residues 1–23; sequence MSRTMNTNKPEENSTEGDAGKLE. The KRAB-related domain maps to 27-90; the sequence is KVKDEFKDIS…QRQAIKPQIN (64 aa). Residues 149 to 172 form a disordered region; that stretch reads SEHAQKPVCSPEEGNTSGQHFGKK. Positions 209, 212, 220, and 223 each coordinate Zn(2+). The SET domain maps to 248–362; it reads PGLRIGPSGI…PGRELLVWYG (115 aa). S-adenosyl-L-methionine is bound by residues 260-262, Tyr295, and 324-325; these read AGL and NC. 292–298 serves as a coordination point for substrate; that stretch reads NSGYSWL. Position 361 (Tyr361) interacts with substrate. An N6,N6,N6-trimethyllysine; alternate modification is found at Lys372. Residue Lys372 is modified to N6-methyllysine; alternate. 2 positions are modified to N6-methyllysine: Lys376 and Lys378. The segment at 392–415 adopts a C2H2-type 1 zinc-finger fold; the sequence is HPCFLCSLAFSSQKFLTQHVEWNH. The Zn(2+) site is built by Cys394, Cys397, His410, and His415. Residues 443–457 show a composition bias toward basic and acidic residues; that stretch reads FDSQNKNDKASNEVK. A disordered region spans residues 443 to 497; it reads FDSQNKNDKASNEVKRKSKPRHKWTRQRISTAFSSTLKEQMRSEESKRTVEEELR. Positions 458–468 are enriched in basic residues; it reads RKSKPRHKWTR. Residues 469 to 480 are compositionally biased toward polar residues; that stretch reads QRISTAFSSTLK. Residues 481–497 are compositionally biased toward basic and acidic residues; it reads EQMRSEESKRTVEEELR. The C2H2-type 2; degenerate zinc finger occupies 522 to 540; sequence QCGQCFSDKSNVSEHQRTH. C2H2-type zinc fingers lie at residues 546–568, 574–596, 602–624, 630–652, 658–680, 686–708, 714–736, 742–764, and 770–792; these read YICR…QRTH and YICR…LRTH. Cys716, Cys719, His732, His736, Cys744, Cys747, His760, His764, Cys772, Cys775, His788, and His792 together coordinate Zn(2+).

The protein belongs to the class V-like SAM-binding methyltransferase superfamily. In terms of assembly, homodimer. Interacts with EHMT2 and CDYL; interaction only takes place when PRDM9 is bound to hotspot DNA. Interacts with CXXC1; this interaction does not link PRDM9-activated recombination hotspot sites with DSB machinery and is not required for the hotspot recognition pathway. Forms a complex with EWSR1, REC8, SYCP3 and SYCP1; complex formation is dependent of phosphorylated form of REC8 and requires PRDM9 bound to hotspot DNA; EWSR1 joins PRDM9 with the chromosomal axis through REC8. In terms of processing, mono-methylated; automethylated. Tri-methylated; automethylated. Mono-methylation is predominant; automethylation is lower and slower than H3 peptide methylation and is in a highest S-adenosyl-L-methionine concentration-dependent. There are two major sites for automethylation at Lys-372 and Lys-378. Lysines can be simultaneously methylated, such as Lys-372(me3)/Lys-376(me1), Lys-372(me1)/Lys-378(me1) and Lys-372(me1)/Lys-376(me1)/Lys-378(me1). Automethylation is an intramolecular (cis) process.

Its subcellular location is the nucleus. It localises to the chromosome. The catalysed reaction is L-lysyl-[protein] + S-adenosyl-L-methionine = N(6)-methyl-L-lysyl-[protein] + S-adenosyl-L-homocysteine + H(+). The enzyme catalyses N(6)-methyl-L-lysyl-[protein] + S-adenosyl-L-methionine = N(6),N(6)-dimethyl-L-lysyl-[protein] + S-adenosyl-L-homocysteine + H(+). It carries out the reaction L-lysyl(4)-[histone H3] + 3 S-adenosyl-L-methionine = N(6),N(6),N(6)-trimethyl-L-lysyl(4)-[histone H3] + 3 S-adenosyl-L-homocysteine + 3 H(+). It catalyses the reaction L-lysyl(36)-[histone H3] + 3 S-adenosyl-L-methionine = N(6),N(6),N(6)-trimethyl-L-lysyl(36)-[histone H3] + 3 S-adenosyl-L-homocysteine + 3 H(+). The catalysed reaction is L-lysyl(9)-[histone H3] + 3 S-adenosyl-L-methionine = N(6),N(6),N(6)-trimethyl-L-lysyl(9)-[histone H3] + 3 S-adenosyl-L-homocysteine + 3 H(+). The enzyme catalyses L-lysyl(20)-[histone H4] + S-adenosyl-L-methionine = N(6)-methyl-L-lysyl(20)-[histone H4] + S-adenosyl-L-homocysteine + H(+). It carries out the reaction N(6)-methyl-L-lysyl(20)-[histone H4] + S-adenosyl-L-methionine = N(6),N(6)-dimethyl-L-lysyl(20)-[histone H4] + S-adenosyl-L-homocysteine + H(+). Histone methyltransferase that sequentially mono-, di-, and tri-methylates both 'Lys-4' (H3K4) and 'Lys-36' (H3K36) of histone H3 to produce respectively trimethylated 'Lys-4' (H3K4me3) and trimethylated 'Lys-36' (H3K36me3) histone H3 and plays a key role in meiotic prophase by determining hotspot localization thereby promoting meiotic recombination. Can also methylate all four core histones with H3 being the best substrate and the most highly modified. Is also able, on one hand, to mono and di-methylate H4K20 and on other hand to trimethylate H3K9 with the di-methylated H3K9 as the best substrate. During meiotic prophase, binds specific DNA sequences through its zinc finger domains thereby determining hotspot localization where it promotes local H3K4me3 and H3K36me3 enrichment on the same nucleosomes through its histone methyltransferase activity. Thereby promotes double-stranded breaks (DSB) formation, at this subset of PRDM9-binding sites, that initiates meiotic recombination for the proper meiotic progression. During meiotic progression hotspot-bound PRDM9 interacts with several complexes; in early leptonema binds CDYL and EHMT2 followed by EWSR1 and CXXC1 by the end of leptonema. EWSR1 joins PRDM9 with the chromosomal axis through REC8. In this way, controls the DSB repair pathway, pairing of homologous chromosomes and sex body formation. Moreover plays a central role in the transcriptional activation of genes during early meiotic prophase thanks to H3K4me3 and H3K36me3 enrichment that represents a specific tag for epigenetic transcriptional activation. In addition performs automethylation. Acetylation and phosphorylation of histone H3 attenuate or prevent histone H3 methylation. In Rattus norvegicus (Rat), this protein is Histone-lysine N-methyltransferase PRDM9.